Consider the following 316-residue polypeptide: N-acetyl-gamma-glutamyl-phosphate reductase (316 aa).

Residue C136 is part of the active site.

Belongs to the NAGSA dehydrogenase family. Type 1 subfamily.

Its subcellular location is the cytoplasm. The enzyme catalyses N-acetyl-L-glutamate 5-semialdehyde + phosphate + NADP(+) = N-acetyl-L-glutamyl 5-phosphate + NADPH + H(+). Its pathway is amino-acid biosynthesis; L-arginine biosynthesis; N(2)-acetyl-L-ornithine from L-glutamate: step 3/4. Its function is as follows. Catalyzes the NADPH-dependent reduction of N-acetyl-5-glutamyl phosphate to yield N-acetyl-L-glutamate 5-semialdehyde. This is N-acetyl-gamma-glutamyl-phosphate reductase from Xanthomonas euvesicatoria pv. vesicatoria (strain 85-10) (Xanthomonas campestris pv. vesicatoria).